We begin with the raw amino-acid sequence, 439 residues long: Ribosomal protein uS12 methylthiotransferase RimO (439 aa).

One can recognise an MTTase N-terminal domain in the interval 3-118 (KKFYITTLGC…AGKILREKFP (116 aa)). [4Fe-4S] cluster is bound by residues Cys12, Cys48, Cys81, Cys157, Cys161, and Cys164. The Radical SAM core domain maps to 143-370 (NYSKPYAYVK…RDVHLAILEE (228 aa)). Positions 373–438 (ESRIGQTYDA…EYDMNGTWIS (66 aa)) constitute a TRAM domain.

It belongs to the methylthiotransferase family. RimO subfamily. [4Fe-4S] cluster is required as a cofactor.

The protein resides in the cytoplasm. It catalyses the reaction L-aspartate(89)-[ribosomal protein uS12]-hydrogen + (sulfur carrier)-SH + AH2 + 2 S-adenosyl-L-methionine = 3-methylsulfanyl-L-aspartate(89)-[ribosomal protein uS12]-hydrogen + (sulfur carrier)-H + 5'-deoxyadenosine + L-methionine + A + S-adenosyl-L-homocysteine + 2 H(+). In terms of biological role, catalyzes the methylthiolation of an aspartic acid residue of ribosomal protein uS12. The chain is Ribosomal protein uS12 methylthiotransferase RimO from Leptospira borgpetersenii serovar Hardjo-bovis (strain L550).